A 326-amino-acid chain; its full sequence is Zona pellucida-binding protein 2 (326 aa).

The signal sequence occupies residues methionine 1–alanine 20. Asparagine 86, asparagine 220, and asparagine 256 each carry an N-linked (GlcNAc...) asparagine glycan.

This sequence belongs to the zona pellucida-binding protein Sp38 family. N-glycosylated.

It localises to the secreted. The protein resides in the cytoplasmic vesicle. It is found in the secretory vesicle. Its subcellular location is the acrosome. In terms of biological role, is implicated in sperm-oocyte interaction during fertilization. In Rattus norvegicus (Rat), this protein is Zona pellucida-binding protein 2 (Zpbp2).